We begin with the raw amino-acid sequence, 429 residues long: Small ribosomal subunit protein bS1 (429 aa).

S1 motif domains follow at residues 55–128, 144–211, 231–299, and 316–385; these read GDVV…LSKK, GDTV…SRKA, GEVV…LSIK, and GSVL…LSMK. Over residues 382 to 399 the composition is skewed to basic and acidic residues; that stretch reads LSMKALEEKPEREDRRGN. The interval 382-412 is disordered; sequence LSMKALEEKPEREDRRGNDGSASRADIAAYK.

This sequence belongs to the bacterial ribosomal protein bS1 family.

Binds mRNA; thus facilitating recognition of the initiation point. It is needed to translate mRNA with a short Shine-Dalgarno (SD) purine-rich sequence. This chain is Small ribosomal subunit protein bS1 (rps1), found in Leuconostoc lactis.